We begin with the raw amino-acid sequence, 362 residues long: Solute carrier family 25 member 3 (362 aa).

The N-terminal 49 residues, 1–49, are a transit peptide targeting the mitochondrion; sequence MFSSVAHLARANPFNTPHLQLVHDGLGDLRSSSPGPTGQPRRPRNLAAA. The Mitochondrial intermembrane segment spans residues 50–63; it reads AVEEQYSCDYGSGR. Solcar repeat units lie at residues 63 to 147, 160 to 244, and 261 to 339; these read RFFI…FKVL, WRTS…TVEA, and EQLV…VKVY. Residues 64–86 form a helical membrane-spanning segment; it reads FFILCGLGGIISCGTTHTALVPL. At 87–121 the chain is on the mitochondrial matrix side; the sequence is DLVKCRMQVDPQKYKGIFNGFSVTLKEDGVRGLAK. K99 is modified (N6-acetyllysine). K112 is modified (N6-methyllysine). A helical transmembrane segment spans residues 122–141; that stretch reads GWAPTFLGYSMQGLCKFGFY. Residues 142–161 are Mitochondrial intermembrane-facing; the sequence is EVFKVLYSNMLGEENTYLWR. A helical membrane pass occupies residues 162 to 183; sequence TSLYLAASASAEFFADIALAPM. The Mitochondrial matrix portion of the chain corresponds to 184–218; it reads EAAKVRIQTQPGYANTLRDAAPKMYKEEGLKAFYK. Y196 is modified (phosphotyrosine). Residue K209 is modified to N6-acetyllysine. Residues 219 to 238 traverse the membrane as a helical segment; the sequence is GVAPLWMRQIPYTMMKFACF. Residues 239–261 lie on the Mitochondrial intermembrane side of the membrane; it reads ERTVEALYKFVVPKPRSECSKPE. A helical transmembrane segment spans residues 262-284; the sequence is QLVVTFVAGYIAGVFCAIVSHPA. The Mitochondrial matrix portion of the chain corresponds to 285 to 314; that stretch reads DSVVSVLNKEKGSSASLVLKRLGFKGVWKG. The chain crosses the membrane as a helical span at residues 315 to 333; that stretch reads LFARIIMIGTLTALQWFIY. Residues 334–362 are Mitochondrial intermembrane-facing; the sequence is DSVKVYFRLPRPPPPEMPESLKKKLGLTQ.

This sequence belongs to the mitochondrial carrier (TC 2.A.29) family. As to quaternary structure, interacts with PPIF; the interaction is impaired by CsA.

Its subcellular location is the mitochondrion inner membrane. The enzyme catalyses phosphate(in) + H(+)(in) = phosphate(out) + H(+)(out). In terms of biological role, inorganic ion transporter that transports phosphate or copper ions across the mitochondrial inner membrane into the matrix compartment. Mediates proton-coupled symport of phosphate ions necessary for mitochondrial oxidative phosphorylation of ADP to ATP. Transports copper ions probably in the form of anionic copper(I) complexes to maintain mitochondrial matrix copper pool and to supply copper for cytochrome C oxidase complex assembly. May also play a role in regulation of the mitochondrial permeability transition pore (mPTP). The sequence is that of Solute carrier family 25 member 3 from Homo sapiens (Human).